Consider the following 508-residue polypeptide: Photosystem II CP47 reaction center protein (508 aa).

6 helical membrane passes run S21 to S36, I101 to W115, G140 to F156, I203 to S218, V237 to V252, and T457 to R472.

Belongs to the PsbB/PsbC family. PsbB subfamily. As to quaternary structure, PSII is composed of 1 copy each of membrane proteins PsbA, PsbB, PsbC, PsbD, PsbE, PsbF, PsbH, PsbI, PsbJ, PsbK, PsbL, PsbM, PsbT, PsbX, PsbY, PsbZ, Psb30/Ycf12, at least 3 peripheral proteins of the oxygen-evolving complex and a large number of cofactors. It forms dimeric complexes. Binds multiple chlorophylls. PSII binds additional chlorophylls, carotenoids and specific lipids. serves as cofactor.

Its subcellular location is the plastid. The protein resides in the chloroplast thylakoid membrane. Its function is as follows. One of the components of the core complex of photosystem II (PSII). It binds chlorophyll and helps catalyze the primary light-induced photochemical processes of PSII. PSII is a light-driven water:plastoquinone oxidoreductase, using light energy to abstract electrons from H(2)O, generating O(2) and a proton gradient subsequently used for ATP formation. The polypeptide is Photosystem II CP47 reaction center protein (Drimys granadensis).